We begin with the raw amino-acid sequence, 214 residues long: Transcription factor MYB24 (214 aa).

2 HTH myb-type domains span residues 14–66 (DAEV…LNYL) and 67–121 (RPDV…QKYI). 2 DNA-binding regions (H-T-H motif) span residues 42–66 (WNSL…LNYL) and 94–117 (WSKI…RTKI).

As to quaternary structure, interacts (via N-terminus) with TIFY10A/JAZ1, TIFY5A/JAZ8 AND TIFY3A/JAZ11. Expressed specifically in flowers. Expressed in all four whorls of the flower and in the vascular tissue of stamen filament and sepals. Detected in male and female gametophytes, especially in microspores and ovules. Weakly expressed in petals and the upper part of pistils.

It localises to the nucleus. Functionally, transcription factor acting redundantly with MYB21 and MYB57 to control stamen filament elongation in the late developed flowers. Contributes with MYB21 to induction of MYB108 by jasmonate. Repressed at the transcript levels by DELLA proteins. This chain is Transcription factor MYB24 (MYB24), found in Arabidopsis thaliana (Mouse-ear cress).